A 757-amino-acid polypeptide reads, in one-letter code: 5-methyltetrahydropteroyltriglutamate--homocysteine methyltransferase (757 aa).

Residues 17–20 (RELK) and K117 each bind 5-methyltetrahydropteroyltri-L-glutamate. Residues 432–434 (IGS) and E485 contribute to the L-homocysteine site. Residues 432–434 (IGS) and E485 each bind L-methionine. Residues 516–517 (RC) and W562 each bind 5-methyltetrahydropteroyltri-L-glutamate. D600 is a binding site for L-homocysteine. L-methionine is bound at residue D600. Position 606 (E606) interacts with 5-methyltetrahydropteroyltri-L-glutamate. Zn(2+) is bound by residues H642, C644, and E666. The Proton donor role is filled by H695. C727 is a binding site for Zn(2+).

This sequence belongs to the vitamin-B12 independent methionine synthase family. It depends on Zn(2+) as a cofactor.

The catalysed reaction is 5-methyltetrahydropteroyltri-L-glutamate + L-homocysteine = tetrahydropteroyltri-L-glutamate + L-methionine. It functions in the pathway amino-acid biosynthesis; L-methionine biosynthesis via de novo pathway; L-methionine from L-homocysteine (MetE route): step 1/1. Its function is as follows. Catalyzes the transfer of a methyl group from 5-methyltetrahydrofolate to homocysteine resulting in methionine formation. In Erwinia tasmaniensis (strain DSM 17950 / CFBP 7177 / CIP 109463 / NCPPB 4357 / Et1/99), this protein is 5-methyltetrahydropteroyltriglutamate--homocysteine methyltransferase.